The sequence spans 551 residues: MRPSSAAWICLLLRIANYTCYSYHVGRSDLYVGRAPRRMTKLSYENGKPHIDAGVVNYFKQIREEFPFFKRENCPAYFDSAATTQKPACVIGVSCPIAQLHRFVSPLCLTASPHRFASPLRLTASPHRFASPQKLTQFYSSENANVHRGIYKMSLDATRSYEQVRKTIKNFINCEREDEIIFTSGTTHGLNLICSMLMERVIKRRQDEIHLTYLEHHSNIVPWQEQVKRKKKGKIKYIPLKSTGYIHIKRLRKRINRNTKVVSISHVSNVLGNIQKLTAIIKAVKEKNKNAIVIVDAAQSFAHIRYDLRRMEANNCCPDVLIASGHKFCAPLGCGFMYLKNTLTCSYKFKPLLYGSNMITTVGKYESEFESPPQLFESGTQNIAGVISMGVAINFLERIDQRLLCRYEMFLYDMLVYHLGQHLQRGLVQLPGGVSESGGSSGGSGGSRPTDPCRLYIHNSRRGGGKKVPILPLWSDQFSSFDLVTFLDFKNVCIRSGHHCASLLLKEFLRIPDCARVSLFFYNTPEEVQFLAEQIASIARMLSGMNRGGVK.

Positions 1–22 (MRPSSAAWICLLLRIANYTCYS) are cleaved as a signal peptide. N6-(pyridoxal phosphate)lysine is present on lysine 327. The Cysteine persulfide intermediate role is filled by cysteine 500.

This sequence belongs to the class-V pyridoxal-phosphate-dependent aminotransferase family. Csd subfamily. In terms of assembly, monomer. Interacts with SufE; interaction enhances cysteine desulfurase activity of SufS. Pyridoxal 5'-phosphate serves as cofactor.

It is found in the plastid. The protein localises to the apicoplast. The catalysed reaction is (sulfur carrier)-H + L-cysteine = (sulfur carrier)-SH + L-alanine. It functions in the pathway cofactor biosynthesis; iron-sulfur cluster biosynthesis. Catalyzes sulfur activation and mobilization in sulfur mobilization (SUF) pathway for iron-sulfur (Fe-S) cluster biogenesis. Active when in complex with a partner protein SufE. Required for apicoplast maintenance. Plays a role in the development of sporozoites in oocysts in mosquitoes. This is Cysteine desulfurase SufS from Plasmodium vivax.